Here is a 282-residue protein sequence, read N- to C-terminus: Acyl-CoA-binding domain-containing protein 6 (282 aa).

Residues 1-31 (MASSFLPAGAITGDSGGELSSGDDSGEVEFP) are disordered. Residues 42 to 127 (LAELFEKAAA…VKKLDPGWNP (86 aa)) form the ACB domain. Residues 69 to 73 (YARYK) and Lys95 contribute to the an acyl-CoA site. Ser106 is subject to Phosphoserine. Residue Tyr114 coordinates an acyl-CoA. 2 ANK repeats span residues 191–220 (EGRA…DINC) and 224–253 (EGQT…DPTL).

As to quaternary structure, monomer. As to expression, detected in placenta and spleen (at protein level). Detected in placenta, umbilical cord blood, CD34-positive hematopoietic progenitor cells and bone marrow.

It is found in the cytoplasm. The protein resides in the nucleus. Functionally, binds long-chain acyl-coenzyme A molecules with a strong preference for unsaturated C18:1-CoA, lower affinity for unsaturated C20:4-CoA, and very weak affinity for saturated C16:0-CoA. Does not bind fatty acids. Plays a role in protein N-myristoylation. The protein is Acyl-CoA-binding domain-containing protein 6 (ACBD6) of Homo sapiens (Human).